A 168-amino-acid chain; its full sequence is Disulfide bond formation protein B 2 (168 aa).

Topologically, residues 1–9 (MLPARLRTF) are cytoplasmic. Residues 10–26 (FLPACLVALAVLVASFR) traverse the membrane as a helical segment. The Periplasmic portion of the chain corresponds to 27–44 (LENTVGLMPCPLCLSQRL). An intrachain disulfide couples Cys36 to Cys39. Residues 45-61 (LLGGYALLCFAAVLQAP) traverse the membrane as a helical segment. At 62-67 (GTRGIL) the chain is on the cytoplasmic side. A helical transmembrane segment spans residues 68-85 (RYARLALGCSLAGALLAA). Residues 86-140 (RHVWLQGAEGVNEVCPVPIGRVFEQSWSEAARQLLLGGPDCRSLAWSFLDLTLPE) are Periplasmic-facing. Residues Cys100 and Cys126 are joined by a disulfide bond. A helical transmembrane segment spans residues 141–159 (WSLLAFLLLAVLPLSCLLA). Residues 160 to 168 (YRFRTLART) are Cytoplasmic-facing.

The protein belongs to the DsbB family.

It localises to the cell inner membrane. Required for disulfide bond formation in some periplasmic proteins. Acts by oxidizing the DsbA protein. The polypeptide is Disulfide bond formation protein B 2 (dsbB2) (Pseudomonas putida (strain ATCC 47054 / DSM 6125 / CFBP 8728 / NCIMB 11950 / KT2440)).